Here is a 528-residue protein sequence, read N- to C-terminus: MSNPLEFPWLSVLVLLPLLAAFGIPLIPQSRWVRWYALAVGAFDLGLMAYVFARHYDLQDFSLQLAERYAWVPQIGFHWSLAVDGLSLPLVLLSGLITTLSIVAAWNLSHKPRLFFFLLLLMYGAQVGVFLAQDMLLFFLMWEIELVPVYLLISIWGGPKRQYAATKFILYTAAASIFILVGSLAMAFYGEGFSLEMAELSAKSYPLALELLAYAALLIAFGVKLPIFPLHTWLPDAHSEASAPISMILAGVLLKMGGYGLIRMNVGMLSEAHVYFAPVLAVLGVVNIIYGALAAFGQNHLKRRLAYSSIAHMGFVLIGISAFTELGINGAVLQMISHGLIAAVLFFLTGITYERTHTLALDKLGGLAKQMPKAFALFTAGSLASLALPGMSGFVGELTVFLGLTTSDAYAPTFKAGIALLAAVGIILTPIYLLSMLRQVFYGAQDPGLVLEDYLGDVRPREMAVALCLLLPILGIGFYPRLATQTYDVTTVAVAAQLRSVLATEIVQRPFFPSPVQSAQVAALPLED.

Helical transmembrane passes span 7–27 (FPWLSVLVLLPLLAAFGIPLI), 32–52 (WVRWYALAVGAFDLGLMAYVF), 86–106 (LSLPLVLLSGLITTLSIVAAW), 114–134 (LFFFLLLLMYGAQVGVFLAQD), 136–156 (LLFFLMWEIELVPVYLLISIW), 168–188 (FILYTAAASIFILVGSLAMAF), 208–228 (ALELLAYAALLIAFGVKLPIF), 242–262 (SAPISMILAGVLLKMGGYGLI), 276–296 (FAPVLAVLGVVNIIYGALAAF), 310–330 (IAHMGFVLIGISAFTELGING), 331–351 (AVLQMISHGLIAAVLFFLTGI), 375–395 (FALFTAGSLASLALPGMSGFV), 417–437 (GIALLAAVGIILTPIYLLSML), and 463–483 (MAVALCLLLPILGIGFYPRLA).

Belongs to the complex I subunit 4 family.

Its subcellular location is the cellular thylakoid membrane. The enzyme catalyses a plastoquinone + NADH + (n+1) H(+)(in) = a plastoquinol + NAD(+) + n H(+)(out). It carries out the reaction a plastoquinone + NADPH + (n+1) H(+)(in) = a plastoquinol + NADP(+) + n H(+)(out). Its function is as follows. NDH-1 shuttles electrons from NAD(P)H, via FMN and iron-sulfur (Fe-S) centers, to quinones in the respiratory chain. The immediate electron acceptor for the enzyme in this species is believed to be plastoquinone. Couples the redox reaction to proton translocation (for every two electrons transferred, four hydrogen ions are translocated across the cytoplasmic membrane), and thus conserves the redox energy in a proton gradient. The polypeptide is NAD(P)H-quinone oxidoreductase chain 4 1 (Synechococcus sp. (strain JA-2-3B'a(2-13)) (Cyanobacteria bacterium Yellowstone B-Prime)).